The primary structure comprises 315 residues: Putative methyltransferase NSUN5C (315 aa).

S-adenosyl-L-methionine contacts are provided by residues 50–56 (VPPQAIK), Asp-74, Arg-79, and Asp-121. Cys-175 acts as the Nucleophile in catalysis. The segment at 245-269 (TSASQAKASAPERTPSPAPKRKKRA) is disordered.

It belongs to the class I-like SAM-binding methyltransferase superfamily. RsmB/NOP family. In terms of tissue distribution, ubiquitous.

In terms of biological role, may have S-adenosyl-L-methionine-dependent methyl-transferase activity. The chain is Putative methyltransferase NSUN5C (NSUN5P2) from Homo sapiens (Human).